The following is a 516-amino-acid chain: Maturase K (516 aa).

This sequence belongs to the intron maturase 2 family. MatK subfamily.

The protein resides in the plastid. The protein localises to the chloroplast. Functionally, usually encoded in the trnK tRNA gene intron. Probably assists in splicing its own and other chloroplast group II introns. The sequence is that of Maturase K from Galanthus nivalis (Common snowdrop).